The following is a 257-amino-acid chain: Phosphonates import ATP-binding protein PhnC 1 (257 aa).

Residues 2–246 form the ABC transporter domain; it reads IELKNVSKVY…VFKDIYGRPL (245 aa). 35 to 42 contacts ATP; sequence GLSGAGKS.

Belongs to the ABC transporter superfamily. Phosphonates importer (TC 3.A.1.9.1) family. As to quaternary structure, the complex is composed of two ATP-binding proteins (PhnC), two transmembrane proteins (PhnE) and a solute-binding protein (PhnD).

The protein resides in the cell membrane. The enzyme catalyses phosphonate(out) + ATP + H2O = phosphonate(in) + ADP + phosphate + H(+). In terms of biological role, part of the ABC transporter complex PhnCDE involved in phosphonates import. Responsible for energy coupling to the transport system. This Halalkalibacterium halodurans (strain ATCC BAA-125 / DSM 18197 / FERM 7344 / JCM 9153 / C-125) (Bacillus halodurans) protein is Phosphonates import ATP-binding protein PhnC 1.